Reading from the N-terminus, the 106-residue chain is ATP-dependent Clp protease adapter protein ClpS (106 aa).

The segment covering 1–10 has biased composition (basic and acidic residues); it reads MSQKTVHDQD. A disordered region spans residues 1–22; that stretch reads MSQKTVHDQDNALLLETGNTKV.

Belongs to the ClpS family. Binds to the N-terminal domain of the chaperone ClpA.

Functionally, involved in the modulation of the specificity of the ClpAP-mediated ATP-dependent protein degradation. In Xylella fastidiosa (strain 9a5c), this protein is ATP-dependent Clp protease adapter protein ClpS.